The sequence spans 432 residues: Short/branched chain specific acyl-CoA dehydrogenase, mitochondrial (432 aa).

The N-terminal 33 residues, 1–33 (MEGLAVRLLRGSRLLRRNFLTCLSSWKIPPHVS), are a transit peptide targeting the mitochondrion. K70 is modified (N6-acetyllysine; alternate). The residue at position 70 (K70) is an N6-succinyllysine; alternate. Residues 174-183 (FCLSEAGAGS) and 207-209 (WIS) each bind FAD. Position 183 (S183) interacts with substrate. S183 carries the phosphoserine modification. The substrate site is built by Y229 and Y283. K284 is modified (N6-acetyllysine; alternate). The residue at position 284 (K284) is an N6-succinyllysine; alternate. Position 291 to 294 (291 to 294 (NEGR)) interacts with substrate. Residues R319, Q330, and 387–391 (EWMGG) contribute to the FAD site. E414 (proton acceptor) is an active-site residue. Position 416-418 (416-418 (ASN)) interacts with FAD. K426 carries the post-translational modification N6-acetyllysine.

The protein belongs to the acyl-CoA dehydrogenase family. As to quaternary structure, homotetramer. Requires FAD as cofactor. Ubiquitously expressed.

It is found in the mitochondrion matrix. It carries out the reaction 2-methylbutanoyl-CoA + oxidized [electron-transfer flavoprotein] + H(+) = (2E)-2-methylbut-2-enoyl-CoA + reduced [electron-transfer flavoprotein]. It catalyses the reaction (2S)-2-methylbutanoyl-CoA + oxidized [electron-transfer flavoprotein] + H(+) = (2E)-2-methylbut-2-enoyl-CoA + reduced [electron-transfer flavoprotein]. The catalysed reaction is (2R)-2-methylbutanoyl-CoA + oxidized [electron-transfer flavoprotein] + H(+) = ethylacryloyl-CoA + reduced [electron-transfer flavoprotein]. The enzyme catalyses butanoyl-CoA + oxidized [electron-transfer flavoprotein] + H(+) = (2E)-butenoyl-CoA + reduced [electron-transfer flavoprotein]. It carries out the reaction 2-methylpropanoyl-CoA + oxidized [electron-transfer flavoprotein] + H(+) = 2-methylpropenoyl-CoA + reduced [electron-transfer flavoprotein]. It catalyses the reaction hexanoyl-CoA + oxidized [electron-transfer flavoprotein] + H(+) = (2E)-hexenoyl-CoA + reduced [electron-transfer flavoprotein]. The catalysed reaction is 2-methylhexanoyl-CoA + oxidized [electron-transfer flavoprotein] + H(+) = 2-methylhexenoyl-CoA + reduced [electron-transfer flavoprotein]. The enzyme catalyses valproyl-CoA + oxidized [electron-transfer flavoprotein] + H(+) = (2E)-2-propylpent-2-enoyl-CoA + reduced [electron-transfer flavoprotein]. It participates in lipid metabolism; mitochondrial fatty acid beta-oxidation. Its pathway is amino-acid degradation; L-isoleucine degradation. With respect to regulation, competitively inhibited by valproyl-CoA. Its function is as follows. Short and branched chain specific acyl-CoA dehydrogenase that catalyzes the removal of one hydrogen from C-2 and C-3 of the fatty acyl-CoA thioester, resulting in the formation of trans-2-enoyl-CoA. Among the different mitochondrial acyl-CoA dehydrogenases, acts specifically on short and branched chain acyl-CoA derivatives such as (S)-2-methylbutyryl-CoA as well as short straight chain acyl-CoAs such as butyryl-CoA. Plays an important role in the metabolism of L-isoleucine by catalyzing the dehydrogenation of 2-methylbutyryl-CoA, one of the steps of the L-isoleucine catabolic pathway. Can also act on valproyl-CoA, a metabolite of valproic acid, an antiepileptic drug. This chain is Short/branched chain specific acyl-CoA dehydrogenase, mitochondrial, found in Homo sapiens (Human).